Here is a 520-residue protein sequence, read N- to C-terminus: DNA-(apurinic or apyrimidinic site) endonuclease 2 (520 aa).

A Mg(2+)-binding site is contributed by Glu-59. The active site involves Tyr-181. Mg(2+)-binding residues include Asp-222, Asn-224, and Asp-353. The Proton donor/acceptor role is filled by Asp-222. Residues Cys-476, His-478, Cys-500, and Cys-514 each contribute to the Zn(2+) site. The segment at 476–520 (CRHGEESMLKTSKTSANPGRKFWICKRSRGDSNNTESSCGFFQWV) adopts a GRF-type zinc-finger fold.

This sequence belongs to the DNA repair enzymes AP/ExoA family. Mg(2+) serves as cofactor. Mn(2+) is required as a cofactor.

It is found in the nucleus. The catalysed reaction is Exonucleolytic cleavage in the 3'- to 5'-direction to yield nucleoside 5'-phosphates.. Functionally, DNA repair enzyme that cleaves apurinic/apyrimidinic (AP) sites and removes 3'-blocking groups present at single strand breaks of damaged DNA. This is DNA-(apurinic or apyrimidinic site) endonuclease 2 (APN2) from Saccharomyces cerevisiae (strain ATCC 204508 / S288c) (Baker's yeast).